We begin with the raw amino-acid sequence, 73 residues long: Ocellatin-PT8 (73 aa).

The first 22 residues, 1 to 22 (MAFLKKSLFLVLFLGLVSLSIC), serve as a signal peptide directing secretion. A propeptide spanning residues 23–39 (DEEKRQDEDDDDDDDEE) is cleaved from the precursor.

Expressed by the skin glands.

Its subcellular location is the secreted. Has antibacterial activity against Gram-negative bacteria E.coli ATCC 25922 (MIC=60 uM), K.pneumoniae ATCC 700603 (MIC=240 uM) and S.choleraesuis ATCC 14028 (MIC=240 uM) and against Gram-positive bacterium S.aureus ATCC 29313 (MIC=240 uM). Shows no hemolytic activity and no cytotoxicity. The polypeptide is Ocellatin-PT8 (Leptodactylus pustulatus (Ceara white-lipped frog)).